The following is a 273-amino-acid chain: SAGA-associated factor 29 homolog B (273 aa).

The SGF29 C-terminal domain maps to 128–273; it reads EAYASLKGEQ…VVALPEGHRQ (146 aa). Histone H3K4me3 N-terminus binding regions lie at residues 171–173 and 220–223; these read DEE and GTTA. The histone H3K4me3 binding stretch occupies residues 245-248; sequence FDDD.

This sequence belongs to the SGF29 family. Expressed in roots, rosette leaves, cauline leaves, stems and flowers.

The protein localises to the nucleus. Functionally, chromatin reader component of the transcription regulatory histone acetylation (HAT) complex SAGA. This chain is SAGA-associated factor 29 homolog B, found in Arabidopsis thaliana (Mouse-ear cress).